We begin with the raw amino-acid sequence, 436 residues long: Phosphomethylpyrimidine synthase (436 aa).

Substrate contacts are provided by residues asparagine 69, methionine 98, tyrosine 127, histidine 163, 185 to 187, 226 to 229, and glutamate 265; these read SRG and DACR. Histidine 269 lines the Zn(2+) pocket. Tyrosine 292 contributes to the substrate binding site. Histidine 333 provides a ligand contact to Zn(2+). Residues cysteine 409, cysteine 412, and cysteine 416 each contribute to the [4Fe-4S] cluster site.

This sequence belongs to the ThiC family. [4Fe-4S] cluster is required as a cofactor.

It carries out the reaction 5-amino-1-(5-phospho-beta-D-ribosyl)imidazole + S-adenosyl-L-methionine = 4-amino-2-methyl-5-(phosphooxymethyl)pyrimidine + CO + 5'-deoxyadenosine + formate + L-methionine + 3 H(+). It participates in cofactor biosynthesis; thiamine diphosphate biosynthesis. Functionally, catalyzes the synthesis of the hydroxymethylpyrimidine phosphate (HMP-P) moiety of thiamine from aminoimidazole ribotide (AIR) in a radical S-adenosyl-L-methionine (SAM)-dependent reaction. The chain is Phosphomethylpyrimidine synthase from Clostridium perfringens (strain ATCC 13124 / DSM 756 / JCM 1290 / NCIMB 6125 / NCTC 8237 / Type A).